A 100-amino-acid chain; its full sequence is Urease subunit gamma (100 aa).

Belongs to the urease gamma subunit family. As to quaternary structure, heterotrimer of UreA (gamma), UreB (beta) and UreC (alpha) subunits. Three heterotrimers associate to form the active enzyme.

It is found in the cytoplasm. It carries out the reaction urea + 2 H2O + H(+) = hydrogencarbonate + 2 NH4(+). The protein operates within nitrogen metabolism; urea degradation; CO(2) and NH(3) from urea (urease route): step 1/1. This chain is Urease subunit gamma, found in Shewanella halifaxensis (strain HAW-EB4).